Here is a 159-residue protein sequence, read N- to C-terminus: Ribosomal RNA large subunit methyltransferase H (159 aa).

S-adenosyl-L-methionine is bound by residues Leu-76, Gly-108, and 127–132 (LSKMTY).

The protein belongs to the RNA methyltransferase RlmH family. Homodimer.

The protein resides in the cytoplasm. The catalysed reaction is pseudouridine(1915) in 23S rRNA + S-adenosyl-L-methionine = N(3)-methylpseudouridine(1915) in 23S rRNA + S-adenosyl-L-homocysteine + H(+). In terms of biological role, specifically methylates the pseudouridine at position 1915 (m3Psi1915) in 23S rRNA. The sequence is that of Ribosomal RNA large subunit methyltransferase H from Ruminiclostridium cellulolyticum (strain ATCC 35319 / DSM 5812 / JCM 6584 / H10) (Clostridium cellulolyticum).